Consider the following 376-residue polypeptide: Transcriptional regulator STP4 (376 aa).

Disordered stretches follow at residues 25-58 (QNYC…PHAS), 89-122 (SSNS…SNSS), and 137-210 (VNCI…NWKP). Low complexity-rich tracts occupy residues 32-50 (SPSP…TSPP) and 89-103 (SSNS…YSPT). 2 stretches are compositionally biased toward polar residues: residues 146-183 (PRST…LSVK) and 191-200 (EPQNSNTIIS). The C2H2-type zinc-finger motif lies at 241–263 (HICKYCERGFARPNDLFRHVKCH).

Its subcellular location is the nucleus. Its function is as follows. Probable transcription factor involved in response to cell wall damage. This Candida albicans (strain SC5314 / ATCC MYA-2876) (Yeast) protein is Transcriptional regulator STP4 (STP4).